A 338-amino-acid chain; its full sequence is DNA-directed RNA polymerase subunit alpha (338 aa).

The alpha N-terminal domain (alpha-NTD) stretch occupies residues 1-226 (MLIAQRPTLT…ELFGLTRELN (226 aa)). The interval 243–338 (YAESLGTPVE…DDDYAETEQY (96 aa)) is alpha C-terminal domain (alpha-CTD). Residues 319 to 338 (AAAEAYDEANDDDYAETEQY) form a disordered region. The span at 323 to 338 (AYDEANDDDYAETEQY) shows a compositional bias: acidic residues.

Belongs to the RNA polymerase alpha chain family. In terms of assembly, homodimer. The RNAP catalytic core consists of 2 alpha, 1 beta, 1 beta' and 1 omega subunit. When a sigma factor is associated with the core the holoenzyme is formed, which can initiate transcription.

The enzyme catalyses RNA(n) + a ribonucleoside 5'-triphosphate = RNA(n+1) + diphosphate. In terms of biological role, DNA-dependent RNA polymerase catalyzes the transcription of DNA into RNA using the four ribonucleoside triphosphates as substrates. In Cutibacterium acnes (strain DSM 16379 / KPA171202) (Propionibacterium acnes), this protein is DNA-directed RNA polymerase subunit alpha.